Reading from the N-terminus, the 517-residue chain is 2,3-bisphosphoglycerate-independent phosphoglycerate mutase (517 aa).

2 residues coordinate Mn(2+): aspartate 12 and serine 62. Serine 62 (phosphoserine intermediate) is an active-site residue. Residues histidine 123, 153-154 (RD), arginine 185, arginine 191, 261-264 (RSDR), and lysine 336 contribute to the substrate site. Residues aspartate 403, histidine 407, aspartate 444, histidine 445, and histidine 463 each contribute to the Mn(2+) site.

The protein belongs to the BPG-independent phosphoglycerate mutase family. In terms of assembly, monomer. Requires Mn(2+) as cofactor.

It carries out the reaction (2R)-2-phosphoglycerate = (2R)-3-phosphoglycerate. It functions in the pathway carbohydrate degradation; glycolysis; pyruvate from D-glyceraldehyde 3-phosphate: step 3/5. Functionally, catalyzes the interconversion of 2-phosphoglycerate and 3-phosphoglycerate. The polypeptide is 2,3-bisphosphoglycerate-independent phosphoglycerate mutase (Methylobacillus flagellatus (strain ATCC 51484 / DSM 6875 / VKM B-1610 / KT)).